The chain runs to 287 residues: Large ribosomal subunit protein uL2 (287 aa).

2 disordered regions span residues 25-57 (TKTEPEKSLTTSKHRAKGRNNTGRITSRRRGGG) and 203-287 (LSAG…GRES). Composition is skewed to basic residues over residues 209 to 220 (GRNRWKGRRPKV) and 259 to 287 (TRNRKKLSSKFIVRRRRKSSKRGRGGRES).

It belongs to the universal ribosomal protein uL2 family. Part of the 50S ribosomal subunit. Forms a bridge to the 30S subunit in the 70S ribosome.

One of the primary rRNA binding proteins. Required for association of the 30S and 50S subunits to form the 70S ribosome, for tRNA binding and peptide bond formation. It has been suggested to have peptidyltransferase activity; this is somewhat controversial. Makes several contacts with the 16S rRNA in the 70S ribosome. In Nostoc punctiforme (strain ATCC 29133 / PCC 73102), this protein is Large ribosomal subunit protein uL2.